Here is a 159-residue protein sequence, read N- to C-terminus: Phosphopantetheine adenylyltransferase (159 aa).

A substrate-binding site is contributed by Thr-10. ATP-binding positions include 10–11 (TF) and His-18. Residues Lys-42, Met-74, and Arg-88 each contribute to the substrate site. Residues 89–91 (GLR), Glu-99, and 124–130 (WSFISSS) each bind ATP.

The protein belongs to the bacterial CoaD family. In terms of assembly, homohexamer. The cofactor is Mg(2+).

Its subcellular location is the cytoplasm. The catalysed reaction is (R)-4'-phosphopantetheine + ATP + H(+) = 3'-dephospho-CoA + diphosphate. The protein operates within cofactor biosynthesis; coenzyme A biosynthesis; CoA from (R)-pantothenate: step 4/5. Functionally, reversibly transfers an adenylyl group from ATP to 4'-phosphopantetheine, yielding dephospho-CoA (dPCoA) and pyrophosphate. The polypeptide is Phosphopantetheine adenylyltransferase (Escherichia coli O7:K1 (strain IAI39 / ExPEC)).